The sequence spans 196 residues: Holliday junction branch migration complex subunit RuvA (196 aa).

A domain I region spans residues 1–65; sequence MIGYLRGKII…EDALQLFGFH (65 aa). Residues 66-140 form a domain II region; that stretch reads DKEEKNLFLS…GKLVSIEEGG (75 aa). The flexible linker stretch occupies residues 140–144; sequence GVVAK. The tract at residues 145–196 is domain III; the sequence is AKSVAHTQITSALLNLGYKSQLVDQFVSSLPADIAVEDGIRKGFQTLSGGLS.

Belongs to the RuvA family. Homotetramer. Forms an RuvA(8)-RuvB(12)-Holliday junction (HJ) complex. HJ DNA is sandwiched between 2 RuvA tetramers; dsDNA enters through RuvA and exits via RuvB. An RuvB hexamer assembles on each DNA strand where it exits the tetramer. Each RuvB hexamer is contacted by two RuvA subunits (via domain III) on 2 adjacent RuvB subunits; this complex drives branch migration. In the full resolvosome a probable DNA-RuvA(4)-RuvB(12)-RuvC(2) complex forms which resolves the HJ.

It is found in the cytoplasm. Its function is as follows. The RuvA-RuvB-RuvC complex processes Holliday junction (HJ) DNA during genetic recombination and DNA repair, while the RuvA-RuvB complex plays an important role in the rescue of blocked DNA replication forks via replication fork reversal (RFR). RuvA specifically binds to HJ cruciform DNA, conferring on it an open structure. The RuvB hexamer acts as an ATP-dependent pump, pulling dsDNA into and through the RuvAB complex. HJ branch migration allows RuvC to scan DNA until it finds its consensus sequence, where it cleaves and resolves the cruciform DNA. This is Holliday junction branch migration complex subunit RuvA from Bdellovibrio bacteriovorus (strain ATCC 15356 / DSM 50701 / NCIMB 9529 / HD100).